A 237-amino-acid chain; its full sequence is MPVKDSSSNKKNQIGKLSERQRRILEVITDAVSLRGYPPSIREIGDAAGLQSTSSVAYQLKELEKKGYLRRDPNKPRAVDVRALPDPIPSKPGRKPGPKKSSVAISPDPAETSPTSFVPIVGSIAAGNPILAEENVDGYFPFPSEIVGDGDLFMLQVEGESMRDAGILHHDWVVVRSQPVAEQGEFVAALIEGEATVKEFHSDSSGVWLLPHNDAFDPIPAEHAEIMGKVVSILRKL.

Polar residues predominate over residues 1–12 (MPVKDSSSNKKN). Residues 1-20 (MPVKDSSSNKKNQIGKLSER) are disordered. A DNA-binding region (H-T-H motif) is located at residues 41-61 (IREIGDAAGLQSTSSVAYQLK). Over residues 67 to 80 (GYLRRDPNKPRAVD) the composition is skewed to basic and acidic residues. The tract at residues 67–112 (GYLRRDPNKPRAVDVRALPDPIPSKPGRKPGPKKSSVAISPDPAET) is disordered. Residues Ser161 and Lys198 each act as for autocatalytic cleavage activity in the active site.

The protein belongs to the peptidase S24 family. As to quaternary structure, homodimer.

It catalyses the reaction Hydrolysis of Ala-|-Gly bond in repressor LexA.. Represses a number of genes involved in the response to DNA damage (SOS response), including recA and lexA. In the presence of single-stranded DNA, RecA interacts with LexA causing an autocatalytic cleavage which disrupts the DNA-binding part of LexA, leading to derepression of the SOS regulon and eventually DNA repair. This chain is LexA repressor, found in Corynebacterium diphtheriae (strain ATCC 700971 / NCTC 13129 / Biotype gravis).